A 358-amino-acid chain; its full sequence is Histidinol-phosphate aminotransferase (358 aa).

Residue Lys210 is modified to N6-(pyridoxal phosphate)lysine.

This sequence belongs to the class-II pyridoxal-phosphate-dependent aminotransferase family. Histidinol-phosphate aminotransferase subfamily. Homodimer. Requires pyridoxal 5'-phosphate as cofactor.

The enzyme catalyses L-histidinol phosphate + 2-oxoglutarate = 3-(imidazol-4-yl)-2-oxopropyl phosphate + L-glutamate. Its pathway is amino-acid biosynthesis; L-histidine biosynthesis; L-histidine from 5-phospho-alpha-D-ribose 1-diphosphate: step 7/9. This Clostridium beijerinckii (strain ATCC 51743 / NCIMB 8052) (Clostridium acetobutylicum) protein is Histidinol-phosphate aminotransferase.